The sequence spans 185 residues: Transcription factor bHLH109 (185 aa).

The region spanning 67-117 (RSMEYRMMMEKKRRKEIKDKVDILQGLMPNHCTKPDLASKLENIIEYIKSL) is the bHLH domain.

This sequence belongs to the bHLH protein family. In terms of assembly, homodimer.

Its subcellular location is the nucleus. In terms of biological role, transcription factor involved in somatic embryogenesis. Acts as a positive regulator of somatic embryo formation. Acts as a positive regulator of ECP63 by targeting its promoter and inducing its expression. This Arabidopsis thaliana (Mouse-ear cress) protein is Transcription factor bHLH109 (BHLH109).